Here is a 447-residue protein sequence, read N- to C-terminus: Glyceraldehyde-3-phosphate dehydrogenase GAPB, chloroplastic (447 aa).

The N-terminal 80 residues, 1–80, are a transit peptide targeting the chloroplast; it reads MATHAALAVS…STPVRGETVA (80 aa). NADP(+)-binding positions include 91-92, Asp115, and Arg160; that span reads RI. D-glyceraldehyde 3-phosphate is bound by residues 234–236, Thr265, Arg280, 293–294, and Arg316; these read SCT and TG. Catalysis depends on Cys235, which acts as the Nucleophile. Asn399 is a binding site for NADP(+).

Belongs to the glyceraldehyde-3-phosphate dehydrogenase family. As to quaternary structure, tetramer of either four A chains (GAPDH 2) or two A and two B chains (GAPDH 1). In terms of tissue distribution, expressed in leaves and stems.

Its subcellular location is the plastid. It is found in the chloroplast membrane. The protein localises to the chloroplast stroma. It carries out the reaction D-glyceraldehyde 3-phosphate + phosphate + NADP(+) = (2R)-3-phospho-glyceroyl phosphate + NADPH + H(+). It participates in carbohydrate biosynthesis; Calvin cycle. Functionally, involved in the photosynthetic reductive pentose phosphate pathway (Calvin-Benson cycle). Catalyzes the reduction of 1,3-diphosphoglycerate by NADPH. The chain is Glyceraldehyde-3-phosphate dehydrogenase GAPB, chloroplastic (GAPB) from Arabidopsis thaliana (Mouse-ear cress).